A 440-amino-acid polypeptide reads, in one-letter code: RUN domain-containing protein 3A (440 aa).

Residues 52–184 (DDSSEEFVNF…IDFSFCLKGE (133 aa)) form the RUN domain. Positions 213 to 233 (DDRESVGGSSSEDSSPEHPYL) are disordered. Positions 262 to 317 (YLEELVRLRETQLKNLEAENKRLTQRISEQAEQSLQEKHQLEGVILELQEQLTGLL) form a coiled coil. The tract at residues 374–402 (LSSESQRLDGKQDGEPWGPIGKDPTPSML) is disordered.

Belongs to the RUNDC3 family.

The protein is RUN domain-containing protein 3A (rundc3a) of Xenopus tropicalis (Western clawed frog).